A 103-amino-acid chain; its full sequence is Large ribosomal subunit protein eL43 (103 aa).

The protein belongs to the eukaryotic ribosomal protein eL43 family.

This is Large ribosomal subunit protein eL43 (RPL37A) from Tetrahymena thermophila (strain SB210).